Here is a 219-residue protein sequence, read N- to C-terminus: Suppressor-of-stellate-like protein (219 aa).

The disordered stretch occupies residues 194–219 (SAESPPIKVESSVSKSPSWLRNVPNF). Over residues 204 to 219 (SSVSKSPSWLRNVPNF) the composition is skewed to polar residues.

It belongs to the casein kinase 2 subunit beta family.

The sequence is that of Suppressor-of-stellate-like protein (Ssl) from Drosophila melanogaster (Fruit fly).